The chain runs to 212 residues: Riboflavin kinase (212 aa).

Residues 1-87 (MKMKTLFLLI…YEEISTALYS (87 aa)) are H-T-H motif-like. A riboflavin kinase region spans residues 88-212 (GFIVGEVISG…DGDKVRIEVV (125 aa)). CDP is bound at residue 97–102 (GIGEGA). 2 residues coordinate Mg(2+): Thr-124 and Asn-126. FMN is bound by residues Thr-180 and Glu-188. Residue 193-196 (VKLR) coordinates CDP.

The protein belongs to the archaeal riboflavin kinase family. Requires Mg(2+) as cofactor.

It catalyses the reaction riboflavin + CTP = CDP + FMN + H(+). It functions in the pathway cofactor biosynthesis; FMN biosynthesis; FMN from riboflavin (CTP route): step 1/1. In terms of biological role, catalyzes the CTP-dependent phosphorylation of riboflavin (vitamin B2) to form flavin mononucleotide (FMN). The polypeptide is Riboflavin kinase (ribK) (Pyrococcus abyssi (strain GE5 / Orsay)).